Consider the following 342-residue polypeptide: Protein-glutamate methylesterase/protein-glutamine glutaminase 3 (342 aa).

One can recognise a Response regulatory domain in the interval 3 to 120; that stretch reads RVLVVEDMPT…SPGFADDARR (118 aa). Asp-54 carries the post-translational modification 4-aspartylphosphate. Residues 152–342 enclose the CheB-type methylesterase domain; the sequence is DVPRGRVVAV…ADRLALWLRR (191 aa). Catalysis depends on residues Ser-164, His-191, and Asp-285.

The protein belongs to the CheB family. In terms of processing, phosphorylated by CheA. Phosphorylation of the N-terminal regulatory domain activates the methylesterase activity.

The protein resides in the cytoplasm. It carries out the reaction [protein]-L-glutamate 5-O-methyl ester + H2O = L-glutamyl-[protein] + methanol + H(+). The enzyme catalyses L-glutaminyl-[protein] + H2O = L-glutamyl-[protein] + NH4(+). Its function is as follows. Involved in chemotaxis. Part of a chemotaxis signal transduction system that modulates chemotaxis in response to various stimuli. Catalyzes the demethylation of specific methylglutamate residues introduced into the chemoreceptors (methyl-accepting chemotaxis proteins or MCP) by CheR. Also mediates the irreversible deamidation of specific glutamine residues to glutamic acid. This chain is Protein-glutamate methylesterase/protein-glutamine glutaminase 3, found in Anaeromyxobacter dehalogenans (strain 2CP-C).